We begin with the raw amino-acid sequence, 226 residues long: Small ribosomal subunit protein uS3 (226 aa).

Residues 39–107 form the KH type-2 domain; it reads IRKFIKNKLY…NILINITEIK (69 aa).

This sequence belongs to the universal ribosomal protein uS3 family. Part of the 30S ribosomal subunit. Forms a tight complex with proteins S10 and S14.

In terms of biological role, binds the lower part of the 30S subunit head. Binds mRNA in the 70S ribosome, positioning it for translation. The protein is Small ribosomal subunit protein uS3 of Acetivibrio thermocellus (strain ATCC 27405 / DSM 1237 / JCM 9322 / NBRC 103400 / NCIMB 10682 / NRRL B-4536 / VPI 7372) (Clostridium thermocellum).